The sequence spans 448 residues: MFKNIARLASMARSAPRTTASFQTRFMATTASGTASASATPATFTLQNGPVFTGRSFGANRVVSGEAVFSTGMVGYPESMTDPSYRGQILVFTQPLIGNYGVPSGKETDPFGLIKYFESPHIQCIGIVVADAALKYSHWTAVESLGEWCKREGVAAISGVDTRAIVTYLREQGSSLGRITVGEEYDAEEDAAFVDPGEINLVRRVSTKQPFHVSAAADVENPLHIAVIDCGVKENILRSLVSRGASITVFPYEYPINDIAHHFDGIFISNGPGDPTHCQQTVLNLRDIMYEKPELSELPIFGICLGHQLLALAAGAKTVKLKYGNRAHNIPALDLTTGQCHITSQNHGYAVDVNTLPAEFKPYFINLNDQSNEGMIHTEKPIFSTQFHPEAKGGPLDTSILFDKYLGQVHQYRAARKSGVDTRPNKLLVDLLPKQRIGVEIDAWDYVQ.

Residues 1–27 (MFKNIARLASMARSAPRTTASFQTRFM) constitute a mitochondrion transit peptide. A Glutamine amidotransferase type-1 domain is found at 224 to 415 (HIAVIDCGVK…LGQVHQYRAA (192 aa)). Cys304 (nucleophile) is an active-site residue. Active-site residues include His388 and Glu390.

Belongs to the CarA family. As to quaternary structure, heterodimer composed of 2 chains; the small (or glutamine) chain promotes the hydrolysis of glutamine to ammonia, which is used by the large (or ammonia) chain to synthesize carbamoyl phosphate.

It localises to the mitochondrion matrix. It catalyses the reaction hydrogencarbonate + L-glutamine + 2 ATP + H2O = carbamoyl phosphate + L-glutamate + 2 ADP + phosphate + 2 H(+). The enzyme catalyses L-glutamine + H2O = L-glutamate + NH4(+). It functions in the pathway amino-acid biosynthesis; L-arginine biosynthesis; carbamoyl phosphate from bicarbonate: step 1/1. Its function is as follows. Small subunit of the arginine-specific carbamoyl phosphate synthase (CPSase). CPSase catalyzes the formation of carbamoyl phosphate from the ammonia moiety of glutamine, carbonate, and phosphate donated by ATP, the first step of the arginine biosynthetic pathway. The small subunit (glutamine amidotransferase) binds and cleaves glutamine to supply the large subunit with the substrate ammonia. The sequence is that of Carbamoyl phosphate synthase arginine-specific small chain (CPA1) from Yarrowia lipolytica (strain CLIB 122 / E 150) (Yeast).